The following is a 166-amino-acid chain: Sec-independent protein translocase protein TatB (166 aa).

The helical transmembrane segment at 2 to 22 (FDGIGFMELLLIGVLGLVVLG) threads the bilayer. The interval 69–166 (SKGLSNLSPE…DTRSNPKANG (98 aa)) is disordered. Polar residues-rich tracts occupy residues 88 to 97 (QAAQSVNRPY) and 112 to 132 (QIYSPVASTVQTSPAQASQAN). Over residues 133–153 (PTATVEASPAPASPATPSEPS) the composition is skewed to low complexity. Residues 155-166 (GADTRSNPKANG) are compositionally biased toward polar residues.

This sequence belongs to the TatB family. As to quaternary structure, the Tat system comprises two distinct complexes: a TatABC complex, containing multiple copies of TatA, TatB and TatC subunits, and a separate TatA complex, containing only TatA subunits. Substrates initially bind to the TatABC complex, which probably triggers association of the separate TatA complex to form the active translocon.

It is found in the cell inner membrane. Functionally, part of the twin-arginine translocation (Tat) system that transports large folded proteins containing a characteristic twin-arginine motif in their signal peptide across membranes. Together with TatC, TatB is part of a receptor directly interacting with Tat signal peptides. TatB may form an oligomeric binding site that transiently accommodates folded Tat precursor proteins before their translocation. This is Sec-independent protein translocase protein TatB from Shewanella baltica (strain OS155 / ATCC BAA-1091).